We begin with the raw amino-acid sequence, 108 residues long: MQVKATAKYMRVSPQKVRKVADAVKGKPVEAGLNVLQFMPQKSAAMIAKVIRSAVANAEVGGVDVDDLVIKGVIADQGPTLKRFRARAQGRGARILKRTSHITVVLEQ.

This sequence belongs to the universal ribosomal protein uL22 family. In terms of assembly, part of the 50S ribosomal subunit.

Functionally, this protein binds specifically to 23S rRNA; its binding is stimulated by other ribosomal proteins, e.g. L4, L17, and L20. It is important during the early stages of 50S assembly. It makes multiple contacts with different domains of the 23S rRNA in the assembled 50S subunit and ribosome. In terms of biological role, the globular domain of the protein is located near the polypeptide exit tunnel on the outside of the subunit, while an extended beta-hairpin is found that lines the wall of the exit tunnel in the center of the 70S ribosome. The chain is Large ribosomal subunit protein uL22 from Desulfatibacillum aliphaticivorans.